A 202-amino-acid chain; its full sequence is FMN-dependent NADH:quinone oxidoreductase (202 aa).

FMN-binding positions include Ser12 and 21 to 23; that span reads SFS.

It belongs to the azoreductase type 1 family. Homodimer. FMN is required as a cofactor.

The catalysed reaction is 2 a quinone + NADH + H(+) = 2 a 1,4-benzosemiquinone + NAD(+). The enzyme catalyses N,N-dimethyl-1,4-phenylenediamine + anthranilate + 2 NAD(+) = 2-(4-dimethylaminophenyl)diazenylbenzoate + 2 NADH + 2 H(+). Quinone reductase that provides resistance to thiol-specific stress caused by electrophilic quinones. Functionally, also exhibits azoreductase activity. Catalyzes the reductive cleavage of the azo bond in aromatic azo compounds to the corresponding amines. This is FMN-dependent NADH:quinone oxidoreductase from Mycoplasma mobile (strain ATCC 43663 / 163K / NCTC 11711) (Mesomycoplasma mobile).